Reading from the N-terminus, the 309-residue chain is Ribosomal RNA small subunit methyltransferase H (309 aa).

S-adenosyl-L-methionine is bound by residues 36 to 38 (GGH), aspartate 56, phenylalanine 82, aspartate 103, and glutamine 110.

This sequence belongs to the methyltransferase superfamily. RsmH family.

Its subcellular location is the cytoplasm. The catalysed reaction is cytidine(1402) in 16S rRNA + S-adenosyl-L-methionine = N(4)-methylcytidine(1402) in 16S rRNA + S-adenosyl-L-homocysteine + H(+). Specifically methylates the N4 position of cytidine in position 1402 (C1402) of 16S rRNA. The chain is Ribosomal RNA small subunit methyltransferase H from Hahella chejuensis (strain KCTC 2396).